A 262-amino-acid polypeptide reads, in one-letter code: F-actin-capping protein subunit alpha (262 aa).

This sequence belongs to the F-actin-capping protein alpha subunit family. Heterodimer of an alpha and a beta subunit.

F-actin-capping proteins bind in a Ca(2+)-independent manner to the fast growing ends of actin filaments (barbed end) thereby blocking the exchange of subunits at these ends. Unlike other capping proteins (such as gelsolin and severin), these proteins do not sever actin filaments. This chain is F-actin-capping protein subunit alpha (CAP1), found in Kluyveromyces lactis (strain ATCC 8585 / CBS 2359 / DSM 70799 / NBRC 1267 / NRRL Y-1140 / WM37) (Yeast).